We begin with the raw amino-acid sequence, 131 residues long: Small ribosomal subunit protein uS8 (131 aa).

It belongs to the universal ribosomal protein uS8 family. In terms of assembly, part of the 30S ribosomal subunit. Contacts proteins S5 and S12.

One of the primary rRNA binding proteins, it binds directly to 16S rRNA central domain where it helps coordinate assembly of the platform of the 30S subunit. The chain is Small ribosomal subunit protein uS8 from Chlorobaculum tepidum (strain ATCC 49652 / DSM 12025 / NBRC 103806 / TLS) (Chlorobium tepidum).